The following is a 126-amino-acid chain: Fluoride-specific ion channel FluC (126 aa).

The next 4 helical transmembrane spans lie at 4–24, 35–55, 67–87, and 100–120; these read YLYIAAGGAAGSLCRYLVSGV, IGTFSVNMIGCLFFGLVTGLF, LLILTGFMGAFTTFSTYMFES, and ALNIGGQSILGFACIVGGLAL. Na(+) is bound by residues G75 and T78.

Belongs to the fluoride channel Fluc/FEX (TC 1.A.43) family.

Its subcellular location is the cell inner membrane. The catalysed reaction is fluoride(in) = fluoride(out). Its activity is regulated as follows. Na(+) is not transported, but it plays an essential structural role and its presence is essential for fluoride channel function. In terms of biological role, fluoride-specific ion channel. Important for reducing fluoride concentration in the cell, thus reducing its toxicity. This chain is Fluoride-specific ion channel FluC, found in Maridesulfovibrio salexigens (strain ATCC 14822 / DSM 2638 / NCIMB 8403 / VKM B-1763) (Desulfovibrio salexigens).